The following is a 477-amino-acid chain: Proline--tRNA ligase (477 aa).

The protein belongs to the class-II aminoacyl-tRNA synthetase family. ProS type 3 subfamily. As to quaternary structure, homodimer.

It is found in the cytoplasm. The catalysed reaction is tRNA(Pro) + L-proline + ATP = L-prolyl-tRNA(Pro) + AMP + diphosphate. Functionally, catalyzes the attachment of proline to tRNA(Pro) in a two-step reaction: proline is first activated by ATP to form Pro-AMP and then transferred to the acceptor end of tRNA(Pro). The sequence is that of Proline--tRNA ligase from Methanoculleus marisnigri (strain ATCC 35101 / DSM 1498 / JR1).